The sequence spans 78 residues: Small ribosomal subunit protein bS16c (78 aa).

It belongs to the bacterial ribosomal protein bS16 family.

The protein localises to the plastid. It is found in the chloroplast. The polypeptide is Small ribosomal subunit protein bS16c (Adiantum capillus-veneris (Maidenhair fern)).